A 169-amino-acid chain; its full sequence is Neurotensin/neuromedin N (169 aa).

Residues methionine 1–cysteine 22 form the signal peptide.

This sequence belongs to the neurotensin family. As to quaternary structure, interacts with NTSR1. Interacts with SORT1. Interacts with SORL1. Post-translationally, neurotensin is cleaved and degraded by Angiotensin-converting enzyme (ACE) and neprilysin (MME).

The protein resides in the secreted. It localises to the cytoplasmic vesicle. It is found in the secretory vesicle. Functionally, neurotensin may play an endocrine or paracrine role in the regulation of fat metabolism. It causes contraction of smooth muscle. In Rattus norvegicus (Rat), this protein is Neurotensin/neuromedin N (Nts).